The sequence spans 199 residues: V-type ATP synthase subunit E (199 aa).

The protein belongs to the V-ATPase E subunit family.

Its function is as follows. Produces ATP from ADP in the presence of a proton gradient across the membrane. In Borrelia garinii subsp. bavariensis (strain ATCC BAA-2496 / DSM 23469 / PBi) (Borreliella bavariensis), this protein is V-type ATP synthase subunit E.